Reading from the N-terminus, the 101-residue chain is Small ribosomal subunit protein uS14 (101 aa).

The segment at 53 to 72 is disordered; that stretch reads RDAAAVRVRNRDSHDGRPRG. Over residues 61-70 the composition is skewed to basic and acidic residues; it reads RNRDSHDGRP.

Belongs to the universal ribosomal protein uS14 family. In terms of assembly, part of the 30S ribosomal subunit. Contacts proteins S3 and S10.

Its function is as follows. Binds 16S rRNA, required for the assembly of 30S particles and may also be responsible for determining the conformation of the 16S rRNA at the A site. This chain is Small ribosomal subunit protein uS14, found in Corynebacterium glutamicum (strain ATCC 13032 / DSM 20300 / JCM 1318 / BCRC 11384 / CCUG 27702 / LMG 3730 / NBRC 12168 / NCIMB 10025 / NRRL B-2784 / 534).